Here is a 121-residue protein sequence, read N- to C-terminus: Large ribosomal subunit protein uL22 (121 aa).

Belongs to the universal ribosomal protein uL22 family. Part of the 50S ribosomal subunit.

Functionally, this protein binds specifically to 23S rRNA; its binding is stimulated by other ribosomal proteins, e.g. L4, L17, and L20. It is important during the early stages of 50S assembly. It makes multiple contacts with different domains of the 23S rRNA in the assembled 50S subunit and ribosome. The globular domain of the protein is located near the polypeptide exit tunnel on the outside of the subunit, while an extended beta-hairpin is found that lines the wall of the exit tunnel in the center of the 70S ribosome. This chain is Large ribosomal subunit protein uL22, found in Pseudarthrobacter chlorophenolicus (strain ATCC 700700 / DSM 12829 / CIP 107037 / JCM 12360 / KCTC 9906 / NCIMB 13794 / A6) (Arthrobacter chlorophenolicus).